Here is a 192-residue protein sequence, read N- to C-terminus: Putative integrase/recombinase y4gC (192 aa).

Positions 1–183 (MPSILERDQI…ATEDLRAIAL (183 aa)) constitute a Tyr recombinase domain. Residues R41, K66, H135, R138, and H161 contribute to the active site. Y170 functions as the O-(3'-phospho-DNA)-tyrosine intermediate in the catalytic mechanism.

The protein belongs to the 'phage' integrase family.

The protein is Putative integrase/recombinase y4gC of Sinorhizobium fredii (strain NBRC 101917 / NGR234).